Consider the following 806-residue polypeptide: MTNKTSPATESATYPVLPLRDIVVFPHMIVPLFVGREKSIRALEEVMGTDKQIMLVTQINATDDDPEPSAIYKVGTIANVLQLLKLPDGTVKVLVEGRSRAEIERYTPRDDFYEAMAHALPEPDEDPVEIEALSRSVVSEFESYVKLNKKISPEVVGVASQIEDYSKLADTVASHLSIKIVEKQEMLETTSVKMRLEKALGFMEGEISVLQVEKRIRSRVKRQMEKTQREYYLNEQMKAIQKELGDSEDGRDEMAELEERISKTKLSKEAREKADAELKKLRQMSPMSAEATVVRNYLDWLLGLPWGKKSKIKTDLNHAEKVLDTDHFGLDKVKERIVEYLAVQARSSKIKGPILCLVGPPGVGKTSLAKSIAKATGREYIRMALGGVRDEAEIRGHRRTYIGSMPGKVVQSMKKAKKSNPLFLLDEIDKMGQDFRGDPSSALLEVLDPEQNSTFMDHYLEVEYDLSNVMFITTANTLNIPPPLMDRMEVIRIAGYTEDEKREIAKRHLLPKAIRDHALQPNEFSVTDGALMAVIQNYTREAGVRNFERELMKLARKAVTEILKGKTKKVEVTAENIHDYLGVPRFRHGEAERDDQVGVVTGLAWTEVGGELLTIEGVMMPGKGRMTVTGNLRDVMKESISAAASYVRSRAIDFGIEPPLFDKRDIHVHVPEGATPKDGPSAGVAMATAIVSVMTGIPISKDVAMTGEITLRGRVLPIGGLKEKLLAALRGGIKKVLIPEENAKDLADIPDNVKNSLEIIPVSRMGEVIAHALLRLPEPIEWDPASQPAALPSVDSQDEAGTSIAH.

Residues 14–207 (YPVLPLRDIV…KALGFMEGEI (194 aa)) form the Lon N-terminal domain. 359 to 366 (GPPGVGKT) serves as a coordination point for ATP. The Lon proteolytic domain maps to 594 to 775 (DDQVGVVTGL…GEVIAHALLR (182 aa)). Residues S681 and K724 contribute to the active site. The segment at 786–806 (SQPAALPSVDSQDEAGTSIAH) is disordered.

The protein belongs to the peptidase S16 family. In terms of assembly, homohexamer. Organized in a ring with a central cavity.

The protein localises to the cytoplasm. It catalyses the reaction Hydrolysis of proteins in presence of ATP.. Functionally, ATP-dependent serine protease that mediates the selective degradation of mutant and abnormal proteins as well as certain short-lived regulatory proteins. Required for cellular homeostasis and for survival from DNA damage and developmental changes induced by stress. Degrades polypeptides processively to yield small peptide fragments that are 5 to 10 amino acids long. Binds to DNA in a double-stranded, site-specific manner. In R.meliloti it is important for controlling the turnover of a constitutively expressed protein(s) that, when unregulated, disrupts normal nodule formation and normal growth. This Rhizobium meliloti (strain 1021) (Ensifer meliloti) protein is Lon protease.